The chain runs to 193 residues: Cysteine and glycine-rich protein 1 (193 aa).

One can recognise an LIM zinc-binding 1 domain in the interval Cys-10–Cys-61. Positions Lys-64 to Lys-69 match the Nuclear localization signal motif. Phosphoserine is present on Ser-81. Lys-84 carries the N6-acetyllysine modification. Lys-91 participates in a covalent cross-link: Glycyl lysine isopeptide (Lys-Gly) (interchain with G-Cter in SUMO2). An N6-acetyllysine mark is found at Lys-112, Lys-131, Lys-137, and Lys-161. In terms of domain architecture, LIM zinc-binding 2 spans Cys-119 to Cys-170. Ser-192 carries the post-translational modification Phosphoserine.

In terms of assembly, interacts with ASCC1; ASCC2 and TRIP4.

The protein resides in the nucleus. Its function is as follows. Could play a role in neuronal development. In Homo sapiens (Human), this protein is Cysteine and glycine-rich protein 1 (CSRP1).